The following is a 123-amino-acid chain: Preprofallaxidin-3 (123 aa).

A signal peptide spans 1 to 22 (MASLKKSLFLVLFLGLVSLSIC). The propeptide occupies 23 to 46 (EEKKRENEDDAEDENHEEESEEKR). The segment at 26–46 (KRENEDDAEDENHEEESEEKR) is disordered. Positions 30 to 42 (EDDAEDENHEEES) are enriched in acidic residues. Leucine 62 carries the post-translational modification Leucine amide. Positions 66 to 70 (SEEKR) are excised as a propeptide. Phenylalanine 74 is subject to Phenylalanine amide. Positions 78-82 (SEEKR) are excised as a propeptide. Phenylalanine 88 carries the phenylalanine amide modification. Residues 92–96 (SEEKR) constitute a propeptide that is removed on maturation. At isoleucine 102 the chain carries Isoleucine amide. Residues 106 to 110 (SEEKR) constitute a propeptide that is removed on maturation. Isoleucine 116 bears the Isoleucine amide mark. Residues 120–123 (KKKK) constitute a propeptide that is removed on maturation.

Belongs to the frog skin active peptide (FSAP) family. Brevinin subfamily. In terms of tissue distribution, expressed by the skin glands.

The protein resides in the secreted. Fallaxidin-1.1 shows no antibacterial activity against Gram-positive or Gram-negative bacteria. Does not inhibit the formation of NO by neuronal nitric oxide synthase. Has no effect on splenocyte proliferation or smooth muscle contraction. In terms of biological role, fallaxidin-1.2 shows no antibacterial activity against Gram-positive or Gram-negative bacteria. Does not inhibit the formation of NO by neuronal nitric oxide synthase. Has no effect on splenocyte proliferation or smooth muscle contraction. Its function is as follows. Fallaxidin-1.3 shows no antibacterial activity against Gram-positive or Gram-negative bacteria. Does not inhibit the formation of NO by neuronal nitric oxide synthase. Has no effect on splenocyte proliferation or smooth muscle contraction. Functionally, fallaxidin-3.2 shows antibacterial activity against the Gram-positive bacteria E.faecalis (MIC=100 uM) and L.lactis (MIC=500 uM). No antibacterial activity against the Gram-positive bacteria B.cereus, L.innocua, M.luteus, S.epidermidis, S.uberis and S.aureus, or the Gram-negative bacteria E.cloacae and E.coli. The polypeptide is Preprofallaxidin-3 (Litoria fallax (Eastern dwarf tree frog)).